Reading from the N-terminus, the 125-residue chain is RutC family protein STK_08110 (125 aa).

This sequence belongs to the RutC family.

This is RutC family protein STK_08110 from Sulfurisphaera tokodaii (strain DSM 16993 / JCM 10545 / NBRC 100140 / 7) (Sulfolobus tokodaii).